The chain runs to 914 residues: MGVRISQIADELGYTSQEVVAKAQEMGYKRIKTGSNSVSDEEASAIYDYIQTGVLPKKTEKKQTAKKSVKKDTVKKDTVKKTAVKKDDSKAAKKTKPIAKKSAPKTEKKVEKKVESKISKPDNEILEAKPEISKPEIKAEPKKEEIEQKQEAEPKIEVMPEKKSKIKSAFARGETLASESLKKRRGLVIVKKKKDLQTTETQKIEAPKTQKINLGLDAIFSNADANLKKKEKKKEKKQVQSKKVDTTKIDLTSDRELADIRIDDDEDMVVLPDLTLKPIQVEQKTKTKDQPNIYKVSQNKVYGNDGSIARGARKKHKKAVKNSDNEIIKSIEIPKEIRLYEFAEKIKKQPSEIISKLFALGLMTTKNDFLDEDAIEILGAEFDIDIKIVDENAKLNYVKVYDEQNLDDKNAVERVPVITIMGHVDHGKTSLLDYIRNSRIARGEAGGITQHVGAYMVEKNGRKITFIDTPGHEAFTSMRARGAEVTDIVIIVVAADDGVKPQTKEAINHAKAAKVPIIIAINKMDKPTANPDMVKSGLAELDIIPVEWGGKYEFVEISAKTGKGIEDLLEIVLLQADLLELKASLNVPAKATIIESSLQKGRGPVATIIVQNGTLRVGDTVVAGVAYGKVRVINDDKGKKLKDIKPGECGVIVGLSEVPEAGETLISVTSDKEAREYAKKIYEHNRQKELSKSTKVTIDELSAKIAEGEIKSLPVIVKADVVGSLEAVKSSLEKLRNDEVRVDIIHSGVGGITQNDVGLASASENCIILGFNIRPTGEVKELAKERGVNIKTYNVIYNLIDDVKAVLGGLMSPIISEIEIGQAEIRQVINVPKIGQIAGCMVTDGSIQRGAKIRVIREGVIKFEGNVSSLKRFKDDVKEVAKGFECGVGIEGYNDMQVGDFIESFKEKEEIASL.

The segment at 58–160 is disordered; that stretch reads KTEKKQTAKK…EAEPKIEVMP (103 aa). Basic and acidic residues predominate over residues 70–91; that stretch reads KKDTVKKDTVKKTAVKKDDSKA. Residues 92–103 are compositionally biased toward basic residues; that stretch reads AKKTKPIAKKSA. Basic and acidic residues predominate over residues 104 to 160; that stretch reads PKTEKKVEKKVESKISKPDNEILEAKPEISKPEIKAEPKKEEIEQKQEAEPKIEVMP. Residues 413 to 582 form the tr-type G domain; the sequence is ERVPVITIMG…LLQADLLELK (170 aa). A G1 region spans residues 422–429; it reads GHVDHGKT. 422-429 is a binding site for GTP; the sequence is GHVDHGKT. The tract at residues 447-451 is G2; the sequence is GITQH. Residues 468 to 471 are G3; that stretch reads DTPG. GTP contacts are provided by residues 468 to 472 and 522 to 525; these read DTPGH and NKMD. The G4 stretch occupies residues 522 to 525; sequence NKMD. The tract at residues 558-560 is G5; the sequence is SAK.

It belongs to the TRAFAC class translation factor GTPase superfamily. Classic translation factor GTPase family. IF-2 subfamily.

It localises to the cytoplasm. Functionally, one of the essential components for the initiation of protein synthesis. Protects formylmethionyl-tRNA from spontaneous hydrolysis and promotes its binding to the 30S ribosomal subunits. Also involved in the hydrolysis of GTP during the formation of the 70S ribosomal complex. This Campylobacter hominis (strain ATCC BAA-381 / DSM 21671 / CCUG 45161 / LMG 19568 / NCTC 13146 / CH001A) protein is Translation initiation factor IF-2.